Reading from the N-terminus, the 499-residue chain is ALBINO3-like protein 1, chloroplastic (499 aa).

A chloroplast-targeting transit peptide spans 1–45 (MSSTISLKPTHLILSSFSTGKVLQFRRSRFSHTPSSSSSRYRTLV). The next 4 membrane-spanning stretches (helical) occupy residues 115–135 (LSTV…TVLV), 184–204 (LAGI…PVWI), 263–283 (LAYL…IQIM), and 302–322 (LLPL…SLYW). Positions 378-499 (LKIPREKGGE…QQHSHETEKR (122 aa)) are disordered. Basic and acidic residues-rich tracts occupy residues 379–420 (KIPR…RQKA), 430–452 (DKAH…KKTE), and 486–499 (HDTE…TEKR). The stretch at 397 to 436 (GERFRLLKEQEAKRRREKEERQKAEAALSNQNTDKAHEQD) forms a coiled coil.

It belongs to the OXA1/ALB3/YidC (TC 2.A.9.2) family. In terms of assembly, homodimer. Interacts with ALB3. Interacts with STIC2. In terms of tissue distribution, highly expressed in green tissues.

The protein localises to the plastid. The protein resides in the chloroplast thylakoid membrane. Its function is as follows. Required for the insertion of some light harvesting chlorophyll-binding proteins (LHCP) into the chloroplast thylakoid membrane. Plays a role in the accumulation of some cytochrome b6f components in the thylakoid membrane. Required for the assembly and/or stability of the F(1)F(0) ATP synthase in chloroplast thylakoid membranes. Functions to stabilize or promote assembly of F(1) during its attachment to the membrane-embedded F(0) part. Participates with STIC2 in thylakoid protein targeting. May function with a specific subset of thylakoidal proteins. This Arabidopsis thaliana (Mouse-ear cress) protein is ALBINO3-like protein 1, chloroplastic.